A 509-amino-acid polypeptide reads, in one-letter code: 2,3-bisphosphoglycerate-independent phosphoglycerate mutase (509 aa).

Mn(2+) contacts are provided by Asp-13 and Ser-63. Catalysis depends on Ser-63, which acts as the Phosphoserine intermediate. Substrate is bound by residues His-124, 154 to 155 (RD), Arg-186, Arg-192, 261 to 264 (RPDR), and Lys-335. 5 residues coordinate Mn(2+): Asp-400, His-404, Asp-441, His-442, and His-459.

It belongs to the BPG-independent phosphoglycerate mutase family. As to quaternary structure, monomer. Requires Mn(2+) as cofactor.

The catalysed reaction is (2R)-2-phosphoglycerate = (2R)-3-phosphoglycerate. It functions in the pathway carbohydrate degradation; glycolysis; pyruvate from D-glyceraldehyde 3-phosphate: step 3/5. Catalyzes the interconversion of 2-phosphoglycerate and 3-phosphoglycerate. The polypeptide is 2,3-bisphosphoglycerate-independent phosphoglycerate mutase (Desulforudis audaxviator (strain MP104C)).